Consider the following 150-residue polypeptide: Non-structural protein (150 aa).

Residues 93–140 (PLFRIRFLLLIMSDSISLTDITISPGTLYSARTLLLRAAVLALTRKPM) form an apoptotic activity region.

Disrupts the host mitochondrial membrane potential and induces apoptosis probably by inducing host CASP8 and CASP9. The chain is Non-structural protein from Bos taurus (Bovine).